Here is a 604-residue protein sequence, read N- to C-terminus: MSSMRIYVAIMKKPSVKHVDNVDKKASKPSWRVSSSATAGLRASSSLQLDVKKPADEILTARRSGNYQPSLWDFNYLQPLNTTHYKEERHLKREAELIEQVKMLLEEEMEAVQQLELVDDLKNLGLSYFFEDQIKQILTFIYNEHKCFRSNVEAEERDLYFTALGFRLLRQHGFQVSQEVFDCFKNEEGSDFKASLGDDTKGLVQLYEASFLLREGEDTLELARQYATKFLQKKVDHELIDDDNNLLSWIRHSLEIPLHWRIQRLEARWFLDAYATRHDVNPIILELAKLDFNIIQATQQEELKDLSRWWNSTCLAEKLPFVRDRLVESYFWAIALFEPHQYGYHRKIAAKIITLITSLDDVYDIYGTLDELQLFTDAIQRWDTESISRLPYYMQLFYMVLYNFVSELAYDGLKEKGFITIPYLQRSWADLVEAYLKEAKWFYNGYTPSMEEYLNNAYISIGATPVISQVFFTLATSIDKPVIESLYEYHRILRLSGMLVRLPDDLGTSPFEMKRGDVPKAILLYMKERNATEIEAQEHVRFLIREAWKEMNTATAAADCPLTDDLVAAAANLGRAAQFMYLDGDGNHSQLHQRIASLLFEPYA.

Residues 1-34 constitute a chloroplast transit peptide; it reads MSSMRIYVAIMKKPSVKHVDNVDKKASKPSWRVS. 5 residues coordinate (2E)-geranyl diphosphate: R323, D360, D364, R501, and D504. Residues D360 and D364 each coordinate Mg(2+). A DDXXD motif motif is present at residues 360–364; it reads DDVYD. Mg(2+)-binding residues include D504, T508, and E512.

This sequence belongs to the terpene synthase family. Tpsb subfamily. As to quaternary structure, monomer. It depends on Mg(2+) as a cofactor. Mn(2+) serves as cofactor.

The protein resides in the plastid. Its subcellular location is the chloroplast. The catalysed reaction is (2E)-geranyl diphosphate + H2O = linalool + diphosphate. The protein operates within secondary metabolite biosynthesis; terpenoid biosynthesis. In terms of biological role, monoterpene synthase (mono-TPS) involved in the biosynthesis of monoterpenes natural products. Catalyzes the conversion of (2E)-geranyl diphosphate (GPP) into linalool. The protein is Linalool synthase Tps-5042L13, chloroplastic of Perilla frutescens (Beefsteak mint).